Here is a 146-residue protein sequence, read N- to C-terminus: Hemoglobin subunit beta (146 aa).

The Globin domain occupies 2-146 (FLTPEENGHV…VANALAHKYH (145 aa)). At Thr12 the chain carries Phosphothreonine. Ser44 bears the Phosphoserine mark. At Lys59 the chain carries N6-acetyllysine. Position 63 (His63) interacts with heme b. Lys82 is subject to N6-acetyllysine. His92 contributes to the heme b binding site. An S-nitrosocysteine modification is found at Cys93. Lys144 bears the N6-acetyllysine mark.

Belongs to the globin family. Heterotetramer of two alpha chains and two beta chains. In terms of tissue distribution, red blood cells.

Involved in oxygen transport from the lung to the various peripheral tissues. The protein is Hemoglobin subunit beta (HBB) of Hapalemur griseus (Gray gentle lemur).